The primary structure comprises 215 residues: Adenylate kinase (215 aa).

10–15 is an ATP binding site; the sequence is GAGKGT. Positions 30–59 are NMP; it reads STGDMLREAVAAGTELGKKVKEIIEKGLLV. AMP is bound by residues Thr31, Arg36, 57-59, 85-88, and Gln92; these read LLV and GFPR. The segment at 126-163 is LID; it reads SRRVCPSCGKVYNLLTIKPKNDMLCDDCNIGLIQREDD. Arg127 is a binding site for ATP. The Zn(2+) site is built by Cys130 and Cys133. Residue 136-137 coordinates ATP; sequence VY. 2 residues coordinate Zn(2+): Cys150 and Cys153. AMP contacts are provided by Arg160 and Arg171. Leu199 is a binding site for ATP.

This sequence belongs to the adenylate kinase family. Monomer.

It is found in the cytoplasm. It catalyses the reaction AMP + ATP = 2 ADP. It participates in purine metabolism; AMP biosynthesis via salvage pathway; AMP from ADP: step 1/1. Catalyzes the reversible transfer of the terminal phosphate group between ATP and AMP. Plays an important role in cellular energy homeostasis and in adenine nucleotide metabolism. This is Adenylate kinase from Kosmotoga olearia (strain ATCC BAA-1733 / DSM 21960 / TBF 19.5.1).